A 630-amino-acid polypeptide reads, in one-letter code: Biosynthetic arginine decarboxylase (630 aa).

K99 is subject to N6-(pyridoxal phosphate)lysine. Position 279–289 (279–289 (FDVGGGLGVDY)) interacts with substrate.

This sequence belongs to the Orn/Lys/Arg decarboxylase class-II family. SpeA subfamily. The cofactor is Mg(2+). It depends on pyridoxal 5'-phosphate as a cofactor.

The enzyme catalyses L-arginine + H(+) = agmatine + CO2. It participates in amine and polyamine biosynthesis; agmatine biosynthesis; agmatine from L-arginine: step 1/1. Catalyzes the biosynthesis of agmatine from arginine. In Neisseria meningitidis serogroup B (strain ATCC BAA-335 / MC58), this protein is Biosynthetic arginine decarboxylase.